A 91-amino-acid polypeptide reads, in one-letter code: Elongation factor 1-beta (91 aa).

It belongs to the EF-1-beta/EF-1-delta family.

Promotes the exchange of GDP for GTP in EF-1-alpha/GDP, thus allowing the regeneration of EF-1-alpha/GTP that could then be used to form the ternary complex EF-1-alpha/GTP/AAtRNA. The chain is Elongation factor 1-beta from Thermococcus kodakarensis (strain ATCC BAA-918 / JCM 12380 / KOD1) (Pyrococcus kodakaraensis (strain KOD1)).